The primary structure comprises 124 residues: uncharacterized protein (124 aa).

This is an uncharacterized protein from Bacillus subtilis (strain 168).